The following is a 638-amino-acid chain: Exotoxin A (638 aa).

A signal peptide spans 1–25; it reads MHLTPHWIPLVASLGLLAGGSFASA. The tract at residues 26–277 is domain Ia (required for target cell recognition); that stretch reads AEEAFDLWNE…VISHRLHFPE (252 aa). Residues 278-389 are II (required for translocation in target cell cytoplasm); sequence GGSLAALTAH…TGNDEAGAAS (112 aa). A disulfide bond links C290 and C312. The interval 390-429 is domain Ib; it reads ADVVSLTCPVAAGECAGPADSGDALLERNYPTGAEFLGDG. Residues 430 to 638 form an III (required for ADP-ribosyl activity) region; sequence GDISFSTRGT…PGKPPREDLK (209 aa). Residues 465–467, S474, 479–485, and E578 contribute to the NAD(+) site; these read HGT and GVRARSQ. E578 is a catalytic residue. Residues 596-638 are disordered; sequence IPTDPRNVGGDLDPSSIPDKEQAISALPDYASQPGKPPREDLK.

In terms of processing, the 8 cysteines participate in intrachain disulfide bonds.

It carries out the reaction diphthamide-[translation elongation factor 2] + NAD(+) = N-(ADP-D-ribosyl)diphthamide-[translation elongation factor 2] + nicotinamide + H(+). Its activity is regulated as follows. Inhibited by 1,8-naphthalimide (NAP) as well as a number of poly(ADP-ribose) polymerase inhibitors and other compounds. Its function is as follows. An NAD-dependent ADP-ribosyltransferase (ADPRT). Catalyzes the transfer of the ADP ribosyl moiety of oxidized NAD (NAD(+)) onto eukaryotic elongation factor 2 (eEF-2) thus arresting protein synthesis. Has an LD(50) of 65 ng/ml against the human lung epithelial cell line C38. In Pseudomonas aeruginosa (strain ATCC 15692 / DSM 22644 / CIP 104116 / JCM 14847 / LMG 12228 / 1C / PRS 101 / PAO1), this protein is Exotoxin A.